The primary structure comprises 236 residues: Small ribosomal subunit protein uS2c (236 aa).

Belongs to the universal ribosomal protein uS2 family.

The protein resides in the plastid. Its subcellular location is the chloroplast. The polypeptide is Small ribosomal subunit protein uS2c (rps2) (Illicium oligandrum (Star anise)).